Here is a 150-residue protein sequence, read N- to C-terminus: Large ribosomal subunit protein bL9 (150 aa).

This sequence belongs to the bacterial ribosomal protein bL9 family.

Its function is as follows. Binds to the 23S rRNA. This Cupriavidus metallidurans (strain ATCC 43123 / DSM 2839 / NBRC 102507 / CH34) (Ralstonia metallidurans) protein is Large ribosomal subunit protein bL9.